We begin with the raw amino-acid sequence, 111 residues long: Prothymosin alpha (111 aa).

An N-acetylmethionine modification is found at methionine 1. A disordered region spans residues 1–111; the sequence is MSDAAVDTSS…TKKQKTEEDD (111 aa). At serine 2 the chain carries N-acetylserine; in Prothymosin alpha, N-terminally processed. Serine 2 is modified (phosphoserine). Phosphothreonine is present on threonine 8. Phosphoserine occurs at positions 9 and 10. Threonine 13 and threonine 14 each carry phosphothreonine. The segment covering 13-31 has biased composition (basic and acidic residues); that stretch reads TTKDLKEKKEVVEEAENGR. Residue lysine 15 is modified to N6-acetyllysine; alternate. Lysine 15 bears the N6-succinyllysine; alternate mark. A compositionally biased stretch (acidic residues) spans 43–84; sequence ENGEQEADNEVDEEEEEGGEEEEEEEEGDGEEEDGDEDEEAE. Residues 101-111 are compositionally biased toward basic and acidic residues; the sequence is DTKKQKTEEDD. A Phosphothreonine modification is found at threonine 102. Residue lysine 103 is modified to N6-acetyllysine; alternate. Lysine 103 is covalently cross-linked (Glycyl lysine isopeptide (Lys-Gly) (interchain with G-Cter in SUMO2); alternate). Threonine 107 carries the phosphothreonine modification.

Belongs to the pro/parathymosin family. In terms of assembly, interacts with NUPR1; regulates apoptotic process. Post-translationally, covalently linked to a small RNA of about 20 nucleotides.

The protein localises to the nucleus. Prothymosin alpha may mediate immune function by conferring resistance to certain opportunistic infections. The polypeptide is Prothymosin alpha (Ptma) (Mus musculus (Mouse)).